A 265-amino-acid chain; its full sequence is Late expression factor 5 (265 aa).

This sequence belongs to the baculoviridae LEF-5 family. In terms of assembly, interacts (via N-terminus) with itself.

The protein resides in the host nucleus. In terms of biological role, plays a role in the transcription of late viral genes. May function as an transcriptional initiation factor. In Lepidoptera (butterflies and moths), this protein is Late expression factor 5 (LEF-5).